A 172-amino-acid polypeptide reads, in one-letter code: Large ribosomal subunit protein uL10 (172 aa).

Belongs to the universal ribosomal protein uL10 family. As to quaternary structure, part of the ribosomal stalk of the 50S ribosomal subunit. The N-terminus interacts with L11 and the large rRNA to form the base of the stalk. The C-terminus forms an elongated spine to which L12 dimers bind in a sequential fashion forming a multimeric L10(L12)X complex.

Forms part of the ribosomal stalk, playing a central role in the interaction of the ribosome with GTP-bound translation factors. This Francisella philomiragia subsp. philomiragia (strain ATCC 25017 / CCUG 19701 / FSC 153 / O#319-036) protein is Large ribosomal subunit protein uL10.